The chain runs to 231 residues: Ribose-5-phosphate isomerase A (231 aa).

Residues 32 to 35 (TGST), 85 to 88 (DGAD), and 98 to 101 (KGGG) each bind substrate. The Proton acceptor role is filled by Glu107. Lys125 provides a ligand contact to substrate.

Belongs to the ribose 5-phosphate isomerase family. As to quaternary structure, homodimer.

It catalyses the reaction aldehydo-D-ribose 5-phosphate = D-ribulose 5-phosphate. The protein operates within carbohydrate degradation; pentose phosphate pathway; D-ribose 5-phosphate from D-ribulose 5-phosphate (non-oxidative stage): step 1/1. Catalyzes the reversible conversion of ribose-5-phosphate to ribulose 5-phosphate. The sequence is that of Ribose-5-phosphate isomerase A from Paraburkholderia xenovorans (strain LB400).